The primary structure comprises 270 residues: 3-phenylpropionate-dihydrodiol/cinnamic acid-dihydrodiol dehydrogenase (270 aa).

Residue 10–34 (FITGGGSGLGLALVERFIEEGAQVA) participates in NAD(+) binding. S143 lines the substrate pocket. The Proton acceptor role is filled by Y156.

It belongs to the short-chain dehydrogenases/reductases (SDR) family.

The catalysed reaction is 3-(cis-5,6-dihydroxycyclohexa-1,3-dien-1-yl)propanoate + NAD(+) = 3-(2,3-dihydroxyphenyl)propanoate + NADH + H(+). The enzyme catalyses (2E)-3-(cis-5,6-dihydroxycyclohexa-1,3-dien-1-yl)prop-2-enoate + NAD(+) = (2E)-3-(2,3-dihydroxyphenyl)prop-2-enoate + NADH + H(+). Its pathway is aromatic compound metabolism; 3-phenylpropanoate degradation. Converts 3-phenylpropionate-dihydrodiol (PP-dihydrodiol) and cinnamic acid-dihydrodiol (CI-dihydrodiol) into 3-(2,3-dihydroxylphenyl)propanoic acid (DHPP) and 2,3-dihydroxicinnamic acid (DHCI), respectively. The protein is 3-phenylpropionate-dihydrodiol/cinnamic acid-dihydrodiol dehydrogenase of Escherichia coli O8 (strain IAI1).